We begin with the raw amino-acid sequence, 636 residues long: Ligand-gated ion channel 4 (636 aa).

Positions 1–25 (MVICHSCTTFCILLVIDLVPCRIVG) are cleaved as a signal peptide. Topologically, residues 26 to 326 (MENVENRVMF…IHMHRRPLFY (301 aa)) are extracellular. N45, N141, N179, and N227 each carry an N-linked (GlcNAc...) asparagine glycan. An intrachain disulfide couples C240 to C254. N284 carries an N-linked (GlcNAc...) asparagine glycan. 3 helical membrane passes run 327–347 (VFNHIVPCVLISSMAVLGFLM), 357–377 (MIITTLLSMGVYLQSITESIP), and 383–403 (VPLIGMYYVSSLLMVCLATCV). The Cytoplasmic portion of the chain corresponds to 404–602 (NVITLNMHRN…QLASVVDRLL (199 aa)). Residues 603–623 (LCLFCTATLFTIICLLIVPVV) form a helical membrane-spanning segment.

This sequence belongs to the ligand-gated ion channel (TC 1.A.9) family.

It is found in the postsynaptic cell membrane. It localises to the cell membrane. Its function is as follows. Acetylcholine receptor. This Caenorhabditis briggsae protein is Ligand-gated ion channel 4.